The primary structure comprises 289 residues: D-xylonolactone lactonase (289 aa).

Residue Glu17 coordinates Fe(2+). 4 residues coordinate D-xylono-1,5-lactone: Arg98, Asn100, Glu119, and Asn145. Asn145 and Asp195 together coordinate Fe(2+). The active-site Proton donor/acceptor is Asp195.

Belongs to the SMP-30/CGR1 family. Requires Fe(2+) as cofactor.

It carries out the reaction D-xylono-1,5-lactone + H2O = D-xylonate + H(+). Its function is as follows. Involved in the degradation of D-xylose. Catalyzes the hydrolysis of D-xylonolactone to D-xylonate. The polypeptide is D-xylonolactone lactonase (Caulobacter vibrioides (strain ATCC 19089 / CIP 103742 / CB 15) (Caulobacter crescentus)).